Reading from the N-terminus, the 284-residue chain is Deoxyribonuclease-1 (284 aa).

A signal peptide spans 1 to 22; the sequence is MRAARLMGALLALAGLLQLALS. Asparagine 40 is a glycosylation site (N-linked (GlcNAc...) asparagine). Glutamate 100 is a catalytic residue. Cysteine 123 and cysteine 126 form a disulfide bridge. An N-linked (GlcNAc...) asparagine glycan is attached at asparagine 128. Residue histidine 156 is part of the active site. A disulfide bond links cysteine 195 and cysteine 231.

This sequence belongs to the DNase I family. Requires Ca(2+) as cofactor. The cofactor is Mg(2+).

Its subcellular location is the secreted. The protein resides in the zymogen granule. The protein localises to the nucleus envelope. The enzyme catalyses Endonucleolytic cleavage to 5'-phosphodinucleotide and 5'-phosphooligonucleotide end-products.. Serum endocuclease secreted into body fluids by a wide variety of exocrine and endocrine organs. Expressed by non-hematopoietic tissues and preferentially cleaves protein-free DNA. Among other functions, seems to be involved in cell death by apoptosis. Binds specifically to G-actin and blocks actin polymerization. Together with DNASE1L3, plays a key role in degrading neutrophil extracellular traps (NETs). NETs are mainly composed of DNA fibers and are released by neutrophils to bind pathogens during inflammation. Degradation of intravascular NETs by DNASE1 and DNASE1L3 is required to prevent formation of clots that obstruct blood vessels and cause organ damage following inflammation. The chain is Deoxyribonuclease-1 (DNASE1) from Sus scrofa (Pig).